A 357-amino-acid chain; its full sequence is Cytochrome c peroxidase, mitochondrial (357 aa).

Residues 1 to 23 (MSATALRIAPIASRTFQRRLGYL) constitute a mitochondrion transit peptide. His-116 acts as the Proton acceptor in catalysis. The segment at 189–212 (PWRSGRTDLPEDMTPDNGRLPDGD) is disordered. His-239 is a heme b binding site. Trp-255 serves as the catalytic Tryptophan radical intermediate.

This sequence belongs to the peroxidase family. Cytochrome c peroxidase subfamily. In terms of assembly, forms a one-to-one complex with cytochrome c. Heme b is required as a cofactor.

The protein resides in the mitochondrion matrix. It localises to the mitochondrion intermembrane space. It catalyses the reaction 2 Fe(II)-[cytochrome c] + H2O2 + 2 H(+) = 2 Fe(III)-[cytochrome c] + 2 H2O. Destroys radicals which are normally produced within the cells and which are toxic to biological systems. The protein is Cytochrome c peroxidase, mitochondrial of Candida glabrata (strain ATCC 2001 / BCRC 20586 / JCM 3761 / NBRC 0622 / NRRL Y-65 / CBS 138) (Yeast).